Consider the following 135-residue polypeptide: Large ribosomal subunit protein eL27x (135 aa).

It belongs to the eukaryotic ribosomal protein eL27 family.

This chain is Large ribosomal subunit protein eL27x (RPL27C), found in Arabidopsis thaliana (Mouse-ear cress).